The primary structure comprises 83 residues: U5-theraphotoxin-Hs1a 3 (83 aa).

Positions 1–21 (MKTSMFLTLTGLVLLFVVCYA) are cleaved as a signal peptide. Positions 22–49 (SESEEKDFPKELLSSIFAADSDFKVEER) are excised as a propeptide. 3 disulfides stabilise this stretch: cysteine 51–cysteine 63, cysteine 56–cysteine 68, and cysteine 62–cysteine 75.

The protein belongs to the neurotoxin 10 (Hwtx-1) family. 51 (Hntx-8) subfamily. Hntx-8 sub-subfamily. Expressed by the venom gland.

Its subcellular location is the secreted. Agglutinates erythrocytes. The sequence is that of U5-theraphotoxin-Hs1a 3 from Cyriopagopus schmidti (Chinese bird spider).